Here is a 464-residue protein sequence, read N- to C-terminus: Dihydrolipoyl dehydrogenase (464 aa).

FAD is bound by residues 36–44 (EGAALGGTC), K53, and A119. C44 and C49 are disulfide-bonded. Residues 184–188 (GGGYI), E207, and 269–272 (AVGR) contribute to the NAD(+) site. 2 residues coordinate FAD: D311 and A319. Residue H443 is the Proton acceptor of the active site.

This sequence belongs to the class-I pyridine nucleotide-disulfide oxidoreductase family. Homodimer. FAD is required as a cofactor.

The protein resides in the cytoplasm. The catalysed reaction is N(6)-[(R)-dihydrolipoyl]-L-lysyl-[protein] + NAD(+) = N(6)-[(R)-lipoyl]-L-lysyl-[protein] + NADH + H(+). The branched-chain alpha-keto dehydrogenase complex catalyzes the overall conversion of alpha-keto acids to acyl-CoA and CO(2). It contains multiple copies of 3 enzymatic components: branched-chain alpha-keto acid decarboxylase (E1), lipoamide acyltransferase (E2) and lipoamide dehydrogenase (E3). The protein is Dihydrolipoyl dehydrogenase of Pseudomonas aeruginosa (strain ATCC 15692 / DSM 22644 / CIP 104116 / JCM 14847 / LMG 12228 / 1C / PRS 101 / PAO1).